Here is a 461-residue protein sequence, read N- to C-terminus: Ornithine decarboxylase (461 aa).

An N6-(pyridoxal phosphate)lysine modification is found at K69. Residues S200, G237, and E274–R277 contribute to the pyridoxal 5'-phosphate site. S303 carries the post-translational modification Phosphoserine; by CK2. Residue Y331 to D332 participates in substrate binding. Catalysis depends on C360, which acts as the Proton donor; shared with dimeric partner. An S-nitrosocysteine modification is found at C360. D361 is a binding site for substrate. Pyridoxal 5'-phosphate is bound at residue Y389.

The protein belongs to the Orn/Lys/Arg decarboxylase class-II family. As to quaternary structure, homodimer. Only the dimer is catalytically active, as the active sites are constructed of residues from both monomers. Does not form a heterodimer with AZIN2. Pyridoxal 5'-phosphate serves as cofactor. As to expression, expressed during testis development in the outer part of the seminiferous tubules.

The catalysed reaction is L-ornithine + H(+) = putrescine + CO2. Its pathway is amine and polyamine biosynthesis; putrescine biosynthesis via L-ornithine pathway; putrescine from L-ornithine: step 1/1. With respect to regulation, inhibited by antizymes (AZs) OAZ1, OAZ2 and OAZ3 in response to polyamine levels. AZs inhibit the assembly of the functional homodimer by binding to ODC monomers. Additionally, OAZ1 targets ODC monomers for ubiquitin-independent proteolytic destruction by the 26S proteasome. Functionally, catalyzes the first and rate-limiting step of polyamine biosynthesis that converts ornithine into putrescine, which is the precursor for the polyamines, spermidine and spermine. Polyamines are essential for cell proliferation and are implicated in cellular processes, ranging from DNA replication to apoptosis. In Mus musculus (Mouse), this protein is Ornithine decarboxylase (Odc1).